Reading from the N-terminus, the 290-residue chain is N-acetylmannosamine kinase (290 aa).

ATP contacts are provided by residues 6–13 and 132–139; these read ALDIGGTK and GVGGGIIL. Zn(2+) contacts are provided by H156, C166, C168, and C173.

The protein belongs to the ROK (NagC/XylR) family. NanK subfamily. Homodimer.

It catalyses the reaction an N-acyl-D-mannosamine + ATP = an N-acyl-D-mannosamine 6-phosphate + ADP + H(+). The protein operates within amino-sugar metabolism; N-acetylneuraminate degradation; D-fructose 6-phosphate from N-acetylneuraminate: step 2/5. Functionally, catalyzes the phosphorylation of N-acetylmannosamine (ManNAc) to ManNAc-6-P. The polypeptide is N-acetylmannosamine kinase (Yersinia pestis (strain Pestoides F)).